A 181-amino-acid chain; its full sequence is MHTQVHTARLVHTADLDSETRQDIRQMVTGAFAGDFTETDWEHTLGGMHALIWHHGAIIAHAAVIQRRLIYRGNALRCGYVEGVAVRADWRGQRLVSALLDAVEQVMRGAYQLGALSSSARARRLYASRGWLPWHGPTSVLAPTGPVRTPDDDGTVFVLPIDISLDTSAELMCDWRAGDVW.

The N-acetyltransferase domain maps to 11 to 162; it reads VHTADLDSET…DGTVFVLPID (152 aa). Residues Asp-35 and 82-83 contribute to the substrate site; that span reads EG. CoA-binding positions include 84-86 and 91-96; these read VAV and RGQRLV. Substrate contacts are provided by residues Ser-117 and 151–152; that span reads DD.

The protein belongs to the AAC(2')-I acetyltransferase family. Homodimer.

In terms of biological role, catalyzes the coenzyme A-dependent acetylation of the 2' hydroxyl or amino group of a broad spectrum of aminoglycosides. It confers resistance to aminoglycosides. This chain is Aminoglycoside 2'-N-acetyltransferase (aac), found in Mycobacterium bovis (strain ATCC BAA-935 / AF2122/97).